We begin with the raw amino-acid sequence, 379 residues long: DnaJ homolog subfamily B member 14 (379 aa).

Residues 1 to 244 (MEGNRDEAEK…GHEREEERGD (244 aa)) are Cytoplasmic-facing. The tract at residues 55-94 (STAGNSPHCRKPSGSGDQSKPNCTKDSTSGSGEGGKGYTK) is disordered. A compositionally biased stretch (polar residues) spans 69–84 (SGDQSKPNCTKDSTSG). Residues 108–172 (NYYEVLGVTK…EKRKQYDLTG (65 aa)) form the J domain. A disordered region spans residues 219–241 (SNGRAGYSQQHQHRHSGHEREEE). A helical membrane pass occupies residues 245-265 (GGFSVFIQLMPIIVLILVSLL). Over 266–379 (SQLMVSNPPY…ERLTSLYKGG (114 aa)) the chain is Lumenal.

The protein belongs to the DnaJ family. DNAJB12/DNAJB14 subfamily. In terms of assembly, interacts (via J domain) with HSPA8/Hsc70. Forms a multiprotein complex, at least composed of DNAJB12, DNAJB14, HSPA8/Hsc70 and SGTA; interaction with DNAJB14 and HSPA8/Hsc70 is direct.

The protein resides in the endoplasmic reticulum membrane. It is found in the nucleus membrane. In terms of biological role, acts as a co-chaperone with HSPA8/Hsc70; required to promote protein folding and trafficking, prevent aggregation of client proteins, and promote unfolded proteins to endoplasmic reticulum-associated degradation (ERAD) pathway. Acts by determining HSPA8/Hsc70's ATPase and polypeptide-binding activities. Can also act independently of HSPA8/Hsc70: together with DNAJB12, acts as a chaperone that promotes maturation of potassium channels KCND2 and KCNH2 by stabilizing nascent channel subunits and assembling them into tetramers. While stabilization of nascent channel proteins is dependent on HSPA8/Hsc70, the process of oligomerization of channel subunits is independent of HSPA8/Hsc70. When overexpressed, forms membranous structures together with DNAJB12 and HSPA8/Hsc70 within the nucleus; the role of these structures, named DJANGOs, is still unclear. Functionally, (Microbial infection) In case of infection by polyomavirus, involved in the virus endoplasmic reticulum membrane penetration and infection. In Homo sapiens (Human), this protein is DnaJ homolog subfamily B member 14.